The following is a 275-amino-acid chain: MIHFTKMHGLGNDFMVVDGVTQNVFFSPEQIRRLANRNFGVGFDQLLLVEPPYDPDLDFHYRIFNADGSEVEQCGNGARCFARFVRNKGLTQKNKIRVSTSSGKMTLRLERDGSVVVNMGVPVTDPSNIPFKAKKVEKTYLLQTPVQTFLCGAISMGNPHCVIEVDDIDTVAVDEIGALLTRHERFSKGVNVGFMQIINPGHIKLRVYERGAGETLACGTGACAAAAIGQLQDKLSRQVRVDLPGGTLHIDWDGEGKPLWMTGPAEHVYDGQIQL.

The substrate site is built by Asn-12, Gln-45, and Asn-65. Catalysis depends on Cys-74, which acts as the Proton donor. Substrate contacts are provided by residues 75–76, Asn-158, Asn-191, and 209–210; these read GN and ER. Cys-218 acts as the Proton acceptor in catalysis. Substrate is bound at residue 219–220; it reads GT.

It belongs to the diaminopimelate epimerase family. As to quaternary structure, homodimer.

The protein localises to the cytoplasm. The enzyme catalyses (2S,6S)-2,6-diaminopimelate = meso-2,6-diaminopimelate. The protein operates within amino-acid biosynthesis; L-lysine biosynthesis via DAP pathway; DL-2,6-diaminopimelate from LL-2,6-diaminopimelate: step 1/1. In terms of biological role, catalyzes the stereoinversion of LL-2,6-diaminopimelate (L,L-DAP) to meso-diaminopimelate (meso-DAP), a precursor of L-lysine and an essential component of the bacterial peptidoglycan. In Shewanella denitrificans (strain OS217 / ATCC BAA-1090 / DSM 15013), this protein is Diaminopimelate epimerase.